A 504-amino-acid chain; its full sequence is Probable cytochrome P450 513E1 (504 aa).

The chain crosses the membrane as a helical span at residues 1–21 (MNLYISILILIISLIIFFKNN). A heme-binding site is contributed by Cys-450.

The protein belongs to the cytochrome P450 family. Heme is required as a cofactor.

The protein localises to the membrane. This is Probable cytochrome P450 513E1 (cyp513E1) from Dictyostelium discoideum (Social amoeba).